We begin with the raw amino-acid sequence, 533 residues long: Heterogeneous nuclear ribonucleoprotein Q (533 aa).

At Ala-2 the chain carries N-acetylalanine. Ser-69 is subject to Phosphoserine. RRM domains lie at 72–151 (TEIF…ISVA), 153–235 (NRLF…WADP), and 248–318 (KVLF…FAKP). Lys-78 participates in a covalent cross-link: Glycyl lysine isopeptide (Lys-Gly) (interchain with G-Cter in SUMO2). An N6-acetyllysine modification is found at Lys-131. Residue Lys-273 is modified to N6-acetyllysine. Tyr-283 carries the phosphotyrosine modification. Residues 310-471 (NIEIVFAKPP…GARGGRGGNV (162 aa)) are interaction with APOBEC1. Asymmetric dimethylarginine; by PRMT1; alternate is present on Arg-354. The residue at position 354 (Arg-354) is an Omega-N-methylarginine; by PRMT1; alternate. 6 tandem repeats follow at residues 358-360 (RGG), 361-363 (RGG), 370-374 (YYGYE), 379-382 (YYGY), 388-390 (RGG), and 395-398 (YYGY). Residues 358–469 (RGGRGGYGYP…VRGARGGRGG (112 aa)) are 8 X 3 AA repeats of R-G-G. Residues 370–398 (YYGYEDYYDYYGYDYHNYRGGYEDPYYGY) are 3 X 4 AA repeats of Y-Y-G-Y. Arg-406 is subject to Omega-N-methylarginine; by PRMT1. Residues 407–533 (GRGGRGARGA…YQDTFGQQWK (127 aa)) are disordered. The stretch at 408–410 (RGG) is one 1-4 repeat. The segment covering 414 to 432 (RGAAPSRGRGAAPPRGRAG) has biased composition (low complexity). Arg-420 carries the post-translational modification Asymmetric dimethylarginine; by PRMT1. At Arg-428 the chain carries Asymmetric dimethylarginine; by PRMT1; alternate. Position 428 is an omega-N-methylarginine; by PRMT1; alternate (Arg-428). The interval 428–459 (RGRAGYSQRGGPGSARGVRGARGGAQQQRGRG) is interaction with SMN. An Asymmetric dimethylarginine; alternate modification is found at Arg-436. Arg-436 is subject to Omega-N-methylarginine; alternate. The 1-5 repeat unit spans residues 436–438 (RGG). Asymmetric dimethylarginine; by PRMT1; alternate is present on residues Arg-446 and Arg-449. 2 positions are modified to omega-N-methylarginine; by PRMT1; alternate: Arg-446 and Arg-449. 3 repeat units span residues 449–451 (RGG), 464–466 (RGG), and 467–469 (RGG). Over residues 460 to 472 (VRGARGGRGGNVG) the composition is skewed to gly residues. The short motif at 474–488 (KRKADGYNQPDSKRR) is the Bipartite nuclear localization signal element. A compositionally biased stretch (polar residues) spans 490–505 (TNNQNWGSQPIAQQPL). Ser-497 is subject to Phosphoserine. Lys-517 is covalently cross-linked (Glycyl lysine isopeptide (Lys-Gly) (interchain with G-Cter in SUMO2)).

In terms of assembly, identified in a histone pre-mRNA complex, at least composed of ERI1, LSM11, SLBP, SNRPB, SYNCRIP and YBX1. Identified in the spliceosome C complex. Component of the coding region determinant (CRD)-mediated complex, composed of DHX9, HNRNPU, IGF2BP1, SYNCRIP and YBX1. Identified in a mRNP complex, at least composed of DHX9, DDX3X, ELAVL1, HNRNPU, IGF2BP1, ILF3, PABPC1, PCBP2, PTBP2, STAU1, STAU2, SYNCRIP and YBX1. Identified in a mRNP granule complex, at least composed of ACTB, ACTN4, DHX9, ERG, HNRNPA1, HNRNPA2B1, HNRNPAB, HNRNPD, HNRNPL, HNRNPR, HNRNPU, HSPA1, HSPA8, IGF2BP1, ILF2, ILF3, NCBP1, NCL, PABPC1, PABPC4, PABPN1, RPLP0, RPS3, RPS3A, RPS4X, RPS8, RPS9, SYNCRIP, YBX1 and untranslated mRNAs. Component of the APOB mRNA editosome. Interacts with APOBEC1 and A1CF. Part of a complex associated with the FOS mCRD domain and consisting of PABPC1, PAIP1, CSDE1/UNR, HNRPD and SYNCRIP. Interacts with HNRPR, SMN, POLR2A hyperphosphorylated C-terminal domain, minute virus of mice (MVM) NS1 protein and through its C-terminal domain with SYT7, SYT8 and SYT9. The non-phosphorylated and phosphorylated forms are colocalized with PAIP1 in polysomes. Interacts with GTPBP1. Interacts with HABP4. Post-translationally, phosphorylated on tyrosine. The membrane-bound form found in microsomes is phosphorylated in vitro by insulin receptor tyrosine kinase (INSR). Phosphorylation is inhibited upon binding to RNA, whereas the cytoplasmic form is poorly phosphorylated.

It is found in the nucleus. Its subcellular location is the nucleoplasm. The protein localises to the cytoplasm. It localises to the microsome. In terms of biological role, heterogenous nuclear ribonucleoprotein (hnRNP) implicated in mRNA processing mechanisms. Component of the CRD-mediated complex that promotes MYC mRNA stability. Is associated in vitro with pre-mRNA, splicing intermediates and mature mRNA protein complexes. Binds to apoB mRNA AU-rich sequences. Part of the APOB mRNA editosome complex and may modulate the postranscriptional C to U RNA-editing of the APOB mRNA through either by binding to A1CF (APOBEC1 complementation factor), to APOBEC1 or to RNA itself. May be involved in translationally coupled mRNA turnover. Implicated with other RNA-binding proteins in the cytoplasmic deadenylation/translational and decay interplay of the FOS mRNA mediated by the major coding-region determinant of instability (mCRD) domain. Interacts in vitro preferentially with poly(A) and poly(U) RNA sequences. May be involved in cytoplasmic vesicle-based mRNA transport through interaction with synaptotagmins. In Rattus norvegicus (Rat), this protein is Heterogeneous nuclear ribonucleoprotein Q (Syncrip).